The chain runs to 148 residues: Large ribosomal subunit protein bL9 (148 aa).

It belongs to the bacterial ribosomal protein bL9 family.

In terms of biological role, binds to the 23S rRNA. The sequence is that of Large ribosomal subunit protein bL9 from Sulfurimonas denitrificans (strain ATCC 33889 / DSM 1251) (Thiomicrospira denitrificans (strain ATCC 33889 / DSM 1251)).